Reading from the N-terminus, the 95-residue chain is Protein TusB (95 aa).

It belongs to the DsrH/TusB family. As to quaternary structure, heterohexamer, formed by a dimer of trimers. The hexameric TusBCD complex contains 2 copies each of TusB, TusC and TusD. The TusBCD complex interacts with TusE.

The protein localises to the cytoplasm. In terms of biological role, part of a sulfur-relay system required for 2-thiolation of 5-methylaminomethyl-2-thiouridine (mnm(5)s(2)U) at tRNA wobble positions. This chain is Protein TusB, found in Buchnera aphidicola subsp. Baizongia pistaciae (strain Bp).